Consider the following 367-residue polypeptide: Undecaprenyl-phosphate alpha-N-acetylglucosaminyl 1-phosphate transferase (367 aa).

Transmembrane regions (helical) follow at residues 3 to 23 (LLTALSELISIFLFTTIFIFL), 45 to 65 (GVIPLVGGISVFAGICFMFGL), 69 to 89 (YIPHLSLYLICAGVLVFVGAM), 129 to 149 (WELVLGPFGYFLTLFAVWAAI), 158 to 178 (IDGLLGGLSSVSFAAMGLILW), 187 to 207 (MWCFAMIAAILPYIMLNLGIL), 213 to 233 (VFMGDAGSTLIGFTVIWLLLE), 242 to 262 (ISPVTALWIIAIPLMDMVAIM), and 318 to 338 (VPEWVMLVLFLLAFFLYGYCI).

It belongs to the glycosyltransferase 4 family. WecA subfamily. The cofactor is Mg(2+). It depends on Mn(2+) as a cofactor.

It is found in the cell inner membrane. The catalysed reaction is di-trans,octa-cis-undecaprenyl phosphate + UDP-N-acetyl-alpha-D-glucosamine = N-acetyl-alpha-D-glucosaminyl-di-trans,octa-cis-undecaprenyl diphosphate + UMP. The protein operates within bacterial outer membrane biogenesis; LPS O-antigen biosynthesis. Its pathway is bacterial outer membrane biogenesis; enterobacterial common antigen biosynthesis. Its activity is regulated as follows. Inhibited by tunicamycin. Catalyzes the transfer of the GlcNAc-1-phosphate moiety from UDP-GlcNAc onto the carrier lipid undecaprenyl phosphate (C55-P), yielding GlcNAc-pyrophosphoryl-undecaprenyl (GlcNAc-PP-C55). The protein is Undecaprenyl-phosphate alpha-N-acetylglucosaminyl 1-phosphate transferase of Salmonella typhimurium (strain LT2 / SGSC1412 / ATCC 700720).